We begin with the raw amino-acid sequence, 781 residues long: Lon protease (781 aa).

The 199-residue stretch at 16-214 (ANVLVTRGIV…KILSFTIDER (199 aa)) folds into the Lon N-terminal domain. Residue 365–372 (GPPGVGKT) coordinates ATP. Residues 601 to 781 (EYMPGVVNGM…YDDVYNRLFK (181 aa)) form the Lon proteolytic domain. Active-site residues include Ser688 and Lys731.

This sequence belongs to the peptidase S16 family. Homohexamer. Organized in a ring with a central cavity.

It localises to the cytoplasm. It catalyses the reaction Hydrolysis of proteins in presence of ATP.. Its function is as follows. ATP-dependent serine protease that mediates the selective degradation of mutant and abnormal proteins as well as certain short-lived regulatory proteins. Required for cellular homeostasis and for survival from DNA damage and developmental changes induced by stress. Degrades polypeptides processively to yield small peptide fragments that are 5 to 10 amino acids long. Binds to DNA in a double-stranded, site-specific manner. The sequence is that of Lon protease from Malacoplasma penetrans (strain HF-2) (Mycoplasma penetrans).